A 118-amino-acid chain; its full sequence is MKNRYIQQFEDAQLKDKTMPAFKAGDTLRLGITIKEGEKTRTQYFEGVCIAIRGNGVDKTFCVRKIGANNIGVEKIFPFYSESLASVEVLRVGRVRRAKLYYLRDRRGKAARIKEVRH.

This sequence belongs to the bacterial ribosomal protein bL19 family.

Its function is as follows. This protein is located at the 30S-50S ribosomal subunit interface and may play a role in the structure and function of the aminoacyl-tRNA binding site. This Helicobacter pylori (strain HPAG1) protein is Large ribosomal subunit protein bL19.